Consider the following 874-residue polypeptide: Lon protease (874 aa).

Residues 18-261 (LPVLPLDDAV…RLLTWTKEHL (244 aa)) enclose the Lon N-terminal domain. Disordered regions lie at residues 47-68 (VDAARTGGSAGSSDARAPGISS), 120-144 (GGVRPAPAGTDTTGTGTADATSGAG), and 298-318 (LSELDGSGGGADGASGSEPAD). Low complexity predominate over residues 124–142 (PAPAGTDTTGTGTADATSG). Residue 430–437 (GPPGVGKT) coordinates ATP. The region spanning 667-851 (TALPGVATGL…REVLDLALEP (185 aa)) is the Lon proteolytic domain. Residues serine 757 and lysine 800 contribute to the active site. Positions 853 to 874 (FDADHGGRSPGRAGHSPTALAA) are disordered.

The protein belongs to the peptidase S16 family. As to quaternary structure, homohexamer. Organized in a ring with a central cavity.

The protein resides in the cytoplasm. It carries out the reaction Hydrolysis of proteins in presence of ATP.. In terms of biological role, ATP-dependent serine protease that mediates the selective degradation of mutant and abnormal proteins as well as certain short-lived regulatory proteins. Required for cellular homeostasis and for survival from DNA damage and developmental changes induced by stress. Degrades polypeptides processively to yield small peptide fragments that are 5 to 10 amino acids long. Binds to DNA in a double-stranded, site-specific manner. This is Lon protease from Frankia alni (strain DSM 45986 / CECT 9034 / ACN14a).